A 331-amino-acid chain; its full sequence is NADH-quinone oxidoreductase subunit H (331 aa).

9 consecutive transmembrane segments (helical) span residues 6-26 (FFIV…ATLA), 45-65 (GPWM…IKLF), 78-98 (FIFL…MSVI), 120-140 (IGIL…LIGG), 167-187 (GLSL…DIVH), 193-213 (ITSW…IAAF), 241-261 (MRWG…SIVI), 263-283 (LIFL…MIFL), and 311-331 (CWKI…FVII).

The protein belongs to the complex I subunit 1 family. In terms of assembly, NDH-1 is composed of 14 different subunits. Subunits NuoA, H, J, K, L, M, N constitute the membrane sector of the complex.

The protein resides in the cell inner membrane. The enzyme catalyses a quinone + NADH + 5 H(+)(in) = a quinol + NAD(+) + 4 H(+)(out). Functionally, NDH-1 shuttles electrons from NADH, via FMN and iron-sulfur (Fe-S) centers, to quinones in the respiratory chain. The immediate electron acceptor for the enzyme in this species is believed to be ubiquinone. Couples the redox reaction to proton translocation (for every two electrons transferred, four hydrogen ions are translocated across the cytoplasmic membrane), and thus conserves the redox energy in a proton gradient. This subunit may bind ubiquinone. This is NADH-quinone oxidoreductase subunit H from Campylobacter hominis (strain ATCC BAA-381 / DSM 21671 / CCUG 45161 / LMG 19568 / NCTC 13146 / CH001A).